The following is a 233-amino-acid chain: Small ribosomal subunit protein uS3 (233 aa).

The region spanning V39–R107 is the KH type-2 domain. The disordered stretch occupies residues P209–N233.

It belongs to the universal ribosomal protein uS3 family. In terms of assembly, part of the 30S ribosomal subunit. Forms a tight complex with proteins S10 and S14.

Binds the lower part of the 30S subunit head. Binds mRNA in the 70S ribosome, positioning it for translation. The sequence is that of Small ribosomal subunit protein uS3 from Laribacter hongkongensis (strain HLHK9).